Here is a 255-residue protein sequence, read N- to C-terminus: Putative cysteine-rich repeat secretory protein 27 (255 aa).

The N-terminal stretch at 1-26 is a signal peptide; the sequence is MISKFGSVHILAVVAIQLLIIPSVSS. 2 consecutive Gnk2-homologous domains span residues 33–135 and 141–252; these read YLHH…TINS and YEND…LYPF.

The protein belongs to the cysteine-rich repeat secretory protein family.

The protein localises to the secreted. This Arabidopsis thaliana (Mouse-ear cress) protein is Putative cysteine-rich repeat secretory protein 27 (CRRSP27).